Consider the following 66-residue polypeptide: MGMRMMFTVFLLVVLATTVVSFPSERASDGRDDTAKDEGSDMEKLVEKKECCNPACGRHYSCKGGR.

The first 21 residues, Met-1–Ser-21, serve as a signal peptide directing secretion. The propeptide occupies Phe-22–Lys-49. 2 disulfides stabilise this stretch: Cys-51/Cys-56 and Cys-52/Cys-62. Gly-64 carries the post-translational modification Glycine amide.

Belongs to the conotoxin A superfamily. Expressed by the venom duct.

It localises to the secreted. Functionally, alpha-conotoxins act on postsynaptic membranes, they bind to the nicotinic acetylcholine receptors (nAChR) and thus inhibit them. Both the globular (with C1-C3; C2-C4 disulfide pattern) and ribbon (C1-C4; C2-C3) isomers reversibly inhibit human muscle-type alpha-1-beta-1-delta-epsilon/CHRNA1-CHRNB1-CHRND-CHRNE nAChRs (IC(50)=116 nM and IC(50)=643 nM, respectively). Both isomers also inhibit alpha-7/CHRNA7 and alpha-9-alpha-10/CHRNA9-CHRNA10 (IC(50)=1113 nM by globular isomer) nAChRs. The protein is Alpha-conotoxin GIB of Conus geographus (Geography cone).